The chain runs to 493 residues: Probable cytosol aminopeptidase (493 aa).

Mn(2+)-binding residues include Lys-262 and Asp-267. Lys-274 is an active-site residue. Residues Asp-286, Asp-345, and Glu-347 each contribute to the Mn(2+) site. Arg-349 is a catalytic residue.

This sequence belongs to the peptidase M17 family. The cofactor is Mn(2+).

Its subcellular location is the cytoplasm. It catalyses the reaction Release of an N-terminal amino acid, Xaa-|-Yaa-, in which Xaa is preferably Leu, but may be other amino acids including Pro although not Arg or Lys, and Yaa may be Pro. Amino acid amides and methyl esters are also readily hydrolyzed, but rates on arylamides are exceedingly low.. It carries out the reaction Release of an N-terminal amino acid, preferentially leucine, but not glutamic or aspartic acids.. Presumably involved in the processing and regular turnover of intracellular proteins. Catalyzes the removal of unsubstituted N-terminal amino acids from various peptides. This is Probable cytosol aminopeptidase from Cyanothece sp. (strain PCC 7425 / ATCC 29141).